Reading from the N-terminus, the 539-residue chain is Glucose-6-phosphate isomerase (539 aa).

The Proton donor role is filled by glutamate 349. Active-site residues include histidine 380 and lysine 508.

This sequence belongs to the GPI family.

It localises to the cytoplasm. It catalyses the reaction alpha-D-glucose 6-phosphate = beta-D-fructose 6-phosphate. It participates in carbohydrate biosynthesis; gluconeogenesis. The protein operates within carbohydrate degradation; glycolysis; D-glyceraldehyde 3-phosphate and glycerone phosphate from D-glucose: step 2/4. Its function is as follows. Catalyzes the reversible isomerization of glucose-6-phosphate to fructose-6-phosphate. The polypeptide is Glucose-6-phosphate isomerase (Caulobacter sp. (strain K31)).